Consider the following 142-residue polypeptide: uncharacterized protein (142 aa).

This is an uncharacterized protein from Methanocaldococcus jannaschii (strain ATCC 43067 / DSM 2661 / JAL-1 / JCM 10045 / NBRC 100440) (Methanococcus jannaschii).